Here is a 130-residue protein sequence, read N- to C-terminus: S-protein homolog 22 (130 aa).

Residues Met1–Gly21 form the signal peptide.

Belongs to the plant self-incompatibility (S1) protein family.

Its subcellular location is the secreted. The sequence is that of S-protein homolog 22 from Arabidopsis thaliana (Mouse-ear cress).